A 261-amino-acid polypeptide reads, in one-letter code: Putative hydro-lyase SSP0308 (261 aa).

Belongs to the D-glutamate cyclase family.

In Staphylococcus saprophyticus subsp. saprophyticus (strain ATCC 15305 / DSM 20229 / NCIMB 8711 / NCTC 7292 / S-41), this protein is Putative hydro-lyase SSP0308.